The sequence spans 230 residues: Heptaprenylglyceryl phosphate synthase (230 aa).

Sn-glycerol 1-phosphate is bound at residue lysine 12. Mg(2+)-binding residues include aspartate 14 and threonine 40. Sn-glycerol 1-phosphate contacts are provided by residues 159 to 164 (YIEYSG), glycine 189, and 209 to 210 (GD).

It belongs to the GGGP/HepGP synthase family. Group I subfamily. As to quaternary structure, homodimer. Mg(2+) is required as a cofactor.

The enzyme catalyses sn-glycerol 1-phosphate + all-trans-heptaprenyl diphosphate = 3-heptaprenyl-sn-glycero-1-phosphate + diphosphate. It functions in the pathway membrane lipid metabolism; glycerophospholipid metabolism. Prenyltransferase that catalyzes in vivo the transfer of the heptaprenyl moiety of heptaprenyl pyrophosphate (HepPP; 35 carbon atoms) to the C3 hydroxyl of sn-glycerol-1-phosphate (G1P), producing heptaprenylglyceryl phosphate (HepGP). This reaction is an ether-bond-formation step in the biosynthesis of archaea-type G1P-based membrane lipids found in Bacillales. In Staphylococcus aureus (strain USA300), this protein is Heptaprenylglyceryl phosphate synthase.